Consider the following 645-residue polypeptide: ATP-dependent DNA helicase Rep (645 aa).

One can recognise a UvrD-like helicase ATP-binding domain in the interval 1–280; that stretch reads MSLNFSQKNA…IKMEHNYRSS (280 aa). ATP-binding positions include 22 to 29 and Arg-278; that span reads AGAGSGKT. Residues 281–562 enclose the UvrD-like helicase C-terminal domain; it reads GRILKAANSL…QLMTLHASKG (282 aa).

This sequence belongs to the helicase family. UvrD subfamily. As to quaternary structure, homodimer.

The catalysed reaction is Couples ATP hydrolysis with the unwinding of duplex DNA by translocating in the 3'-5' direction.. It carries out the reaction ATP + H2O = ADP + phosphate + H(+). Its function is as follows. Rep helicase is a single-stranded DNA-dependent ATPase involved in DNA replication; it can initiate unwinding at a nick in the DNA. It binds to the single-stranded DNA and acts in a progressive fashion along the DNA in the 3' to 5' direction. This Buchnera aphidicola subsp. Acyrthosiphon pisum (strain APS) (Acyrthosiphon pisum symbiotic bacterium) protein is ATP-dependent DNA helicase Rep.